Consider the following 74-residue polypeptide: ATP synthase subunit c (74 aa).

2 consecutive transmembrane segments (helical) span residues 8–28 and 52–72; these read FIGT…VSNI and IGAG…MLLI.

This sequence belongs to the ATPase C chain family. As to quaternary structure, F-type ATPases have 2 components, F(1) - the catalytic core - and F(0) - the membrane proton channel. F(1) has five subunits: alpha(3), beta(3), gamma(1), delta(1), epsilon(1). F(0) has three main subunits: a(1), b(2) and c(10-14). The alpha and beta chains form an alternating ring which encloses part of the gamma chain. F(1) is attached to F(0) by a central stalk formed by the gamma and epsilon chains, while a peripheral stalk is formed by the delta and b chains.

It localises to the cell inner membrane. F(1)F(0) ATP synthase produces ATP from ADP in the presence of a proton or sodium gradient. F-type ATPases consist of two structural domains, F(1) containing the extramembraneous catalytic core and F(0) containing the membrane proton channel, linked together by a central stalk and a peripheral stalk. During catalysis, ATP synthesis in the catalytic domain of F(1) is coupled via a rotary mechanism of the central stalk subunits to proton translocation. Functionally, key component of the F(0) channel; it plays a direct role in translocation across the membrane. A homomeric c-ring of between 10-14 subunits forms the central stalk rotor element with the F(1) delta and epsilon subunits. The chain is ATP synthase subunit c from Rickettsia conorii (strain ATCC VR-613 / Malish 7).